A 968-amino-acid polypeptide reads, in one-letter code: Alanine--tRNA ligase, cytoplasmic (968 aa).

Met-1 bears the N-acetylmethionine mark. Phosphoserine is present on residues Ser-3 and Ser-8. At Lys-19 the chain carries N6-acetyllysine. Residues Arg-77, His-95, Trp-176, and 214-216 (IWN) contribute to the ATP site. 2 residues coordinate L-alanine: Asn-216 and Asp-239. Residue Gly-243 participates in ATP binding. Phosphoserine is present on residues Ser-399 and Ser-555. Zn(2+) contacts are provided by His-605, His-609, Cys-723, and His-727. The Nuclear localization signal motif lies at 750 to 763 (RRIVAVTGAEAQKA). The residue at position 876 (Lys-876) is an N6-acetyllysine. At Lys-943 the chain carries N6,N6,N6-trimethyllysine; alternate. Lys-943 is modified (N6,N6-dimethyllysine; alternate). Lys-943 is modified (N6-methyllysine; alternate).

This sequence belongs to the class-II aminoacyl-tRNA synthetase family. As to quaternary structure, monomer. Interacts with ANKRD16; the interaction is direct. It depends on Zn(2+) as a cofactor. ISGylated. In terms of processing, methylation at 'Lys-943' by METTL21C.

It localises to the cytoplasm. The protein resides in the nucleus. It carries out the reaction tRNA(Ala) + L-alanine + ATP = L-alanyl-tRNA(Ala) + AMP + diphosphate. The enzyme catalyses (S)-lactate + ATP + H(+) = (S)-lactoyl-AMP + diphosphate. The catalysed reaction is (S)-lactoyl-AMP + L-lysyl-[protein] = N(6)-[(S)-lactoyl]-L-lysyl-[protein] + AMP + 2 H(+). With respect to regulation, the protein lactyltransferase activity is inhibited by beta-alanine. Functionally, catalyzes the attachment of alanine to tRNA(Ala) in a two-step reaction: alanine is first activated by ATP to form Ala-AMP and then transferred to the acceptor end of tRNA(Ala). Also edits incorrectly charged tRNA(Ala) via its editing domain. In presence of high levels of lactate, also acts as a protein lactyltransferase that mediates lactylation of lysine residues in target proteins, such as TEAD1, TP53/p53 and YAP1. Protein lactylation takes place in a two-step reaction: lactate is first activated by ATP to form lactate-AMP and then transferred to lysine residues of target proteins. Acts as an inhibitor of TP53/p53 activity by catalyzing lactylation of TP53/p53. Acts as a positive regulator of the Hippo pathway by mediating lactylation of TEAD1 and YAP1. The sequence is that of Alanine--tRNA ligase, cytoplasmic (AARS1) from Pongo abelii (Sumatran orangutan).